The primary structure comprises 419 residues: CCA-adding enzyme (419 aa).

2 residues coordinate ATP: Ser-54 and Arg-57. Ser-54 and Arg-57 together coordinate CTP. Asp-66, Asp-68, and Asp-118 together coordinate Mg(2+). ATP contacts are provided by His-141, Lys-161, and Tyr-170. 3 residues coordinate CTP: His-141, Lys-161, and Tyr-170.

This sequence belongs to the tRNA nucleotidyltransferase/poly(A) polymerase family. Archaeal CCA-adding enzyme subfamily. As to quaternary structure, homodimer. Mg(2+) is required as a cofactor.

It catalyses the reaction a tRNA precursor + 2 CTP + ATP = a tRNA with a 3' CCA end + 3 diphosphate. The catalysed reaction is a tRNA with a 3' CCA end + 2 CTP + ATP = a tRNA with a 3' CCACCA end + 3 diphosphate. In terms of biological role, catalyzes the addition and repair of the essential 3'-terminal CCA sequence in tRNAs without using a nucleic acid template. Adds these three nucleotides in the order of C, C, and A to the tRNA nucleotide-73, using CTP and ATP as substrates and producing inorganic pyrophosphate. tRNA 3'-terminal CCA addition is required both for tRNA processing and repair. Also involved in tRNA surveillance by mediating tandem CCA addition to generate a CCACCA at the 3' terminus of unstable tRNAs. While stable tRNAs receive only 3'-terminal CCA, unstable tRNAs are marked with CCACCA and rapidly degraded. The sequence is that of CCA-adding enzyme from Pyrobaculum aerophilum (strain ATCC 51768 / DSM 7523 / JCM 9630 / CIP 104966 / NBRC 100827 / IM2).